The primary structure comprises 927 residues: Protein unc-45 homolog B (927 aa).

TPR repeat units follow at residues 4–37 (PVQL…ITDK), 41–74 (AVLY…DASD), and 76–108 (KALF…EPKN). ARM repeat units follow at residues 167–206 (DAGA…GMCT), 209–248 (RARA…NIVD), and 746–785 (DKLR…NLAV).

Its subcellular location is the cytoplasm. The protein localises to the myofibril. It localises to the sarcomere. The protein resides in the z line. It is found in the a band. Its subcellular location is the perinuclear region. The protein localises to the cytosol. In terms of biological role, acts as a co-chaperone for HSP90 and is required for proper folding of the myosin motor domain. Plays a role in sarcomere formation during muscle cell assembly. Is necessary for normal early lens development. The protein is Protein unc-45 homolog B of Xenopus laevis (African clawed frog).